Here is a 506-residue protein sequence, read N- to C-terminus: Tripartite terminase subunit 3 (506 aa).

Glutamate 128 functions as the For ATPase activity in the catalytic mechanism. Residues aspartate 282, glutamate 354, and aspartate 475 each act as for nuclease activity in the active site.

Belongs to the herpesviridae TRM3 protein family. As to quaternary structure, interacts with the terminase subunits TRM1 and TRM2. Interacts with portal protein.

The protein resides in the host nucleus. Functionally, component of the molecular motor that translocates viral genomic DNA in empty capsid during DNA packaging. Forms a tripartite terminase complex together with TRM1 and TRM2 in the host cytoplasm. Once the complex reaches the host nucleus, it interacts with the capsid portal vertex. This portal forms a ring in which genomic DNA is translocated into the capsid. TRM3 carries an RNase H-like nuclease activity that plays an important role for the cleavage of concatemeric viral DNA into unit length genomes. The polypeptide is Tripartite terminase subunit 3 (Amazona oratrix (yellow-headed parrot)).